A 214-amino-acid chain; its full sequence is Ribosomal RNA small subunit methyltransferase G (214 aa).

S-adenosyl-L-methionine-binding positions include Gly-78, Leu-83, 129–130, and Arg-144; that span reads AE.

It belongs to the methyltransferase superfamily. RNA methyltransferase RsmG family.

Its subcellular location is the cytoplasm. It carries out the reaction guanosine(527) in 16S rRNA + S-adenosyl-L-methionine = N(7)-methylguanosine(527) in 16S rRNA + S-adenosyl-L-homocysteine. Its function is as follows. Specifically methylates the N7 position of guanine in position 527 of 16S rRNA. The protein is Ribosomal RNA small subunit methyltransferase G of Marinobacter nauticus (strain ATCC 700491 / DSM 11845 / VT8) (Marinobacter aquaeolei).